A 235-amino-acid polypeptide reads, in one-letter code: 5'-methylthioadenosine/S-adenosylhomocysteine nucleosidase (235 aa).

Catalysis depends on Glu-12, which acts as the Proton acceptor. Substrate is bound by residues Gly-78, Ile-152, and 173–174 (ME). The active-site Proton donor is the Asp-197.

Belongs to the PNP/UDP phosphorylase family. MtnN subfamily. Homodimer.

The catalysed reaction is S-adenosyl-L-homocysteine + H2O = S-(5-deoxy-D-ribos-5-yl)-L-homocysteine + adenine. It catalyses the reaction S-methyl-5'-thioadenosine + H2O = 5-(methylsulfanyl)-D-ribose + adenine. It carries out the reaction 5'-deoxyadenosine + H2O = 5-deoxy-D-ribose + adenine. It participates in amino-acid biosynthesis; L-methionine biosynthesis via salvage pathway; S-methyl-5-thio-alpha-D-ribose 1-phosphate from S-methyl-5'-thioadenosine (hydrolase route): step 1/2. Functionally, catalyzes the irreversible cleavage of the glycosidic bond in both 5'-methylthioadenosine (MTA) and S-adenosylhomocysteine (SAH/AdoHcy) to adenine and the corresponding thioribose, 5'-methylthioribose and S-ribosylhomocysteine, respectively. Also cleaves 5'-deoxyadenosine, a toxic by-product of radical S-adenosylmethionine (SAM) enzymes, into 5-deoxyribose and adenine. Thus, is required for in vivo function of the radical SAM enzymes biotin synthase and lipoic acid synthase, that are inhibited by 5'-deoxyadenosine accumulation. The sequence is that of 5'-methylthioadenosine/S-adenosylhomocysteine nucleosidase from Buchnera aphidicola subsp. Schizaphis graminum (strain Sg).